Consider the following 294-residue polypeptide: MGEGKNHQSFSFKNADDEIDLSLSKFSLFKLKMAKSKIIKVFGQNDPVDPNNCYINMRSIKITTSSVLPESDPKYLIWEMSYKTDEEDHTLGQLAWKASYNGTFIVTTTYAMMVTGGELYTPYTAVIRSSDGNEIKGVKVKVTLSWDPANDRPSKARMGGFIQDMYCKTITNGKTQISPMVGWYIGQDERRYCKVLNKSALEFSSEGIYPLMELVSGADSVINPLINKLISGMLNDEEKRRVSLYTSTVGAGTSLTQSEKLLLKKLVESKTGSGLVQFLMRACKELGTDVYLEA.

In terms of assembly, interacts with nucleoprotein.

In terms of biological role, transports viral genome to neighboring plant cells directly through plasmosdesmata, without any budding. The movement protein allows efficient cell to cell propagation, by bypassing the host cell wall barrier. Displays an RNA-binding activity. The protein is Movement protein (3) of Rice yellow stunt virus (RYSV).